The following is a 141-amino-acid chain: D-aminoacyl-tRNA deacylase (141 aa).

The short motif at 133–134 (GP) is the Gly-cisPro motif, important for rejection of L-amino acids element.

Belongs to the DTD family. Homodimer.

It is found in the cytoplasm. The enzyme catalyses glycyl-tRNA(Ala) + H2O = tRNA(Ala) + glycine + H(+). It catalyses the reaction a D-aminoacyl-tRNA + H2O = a tRNA + a D-alpha-amino acid + H(+). An aminoacyl-tRNA editing enzyme that deacylates mischarged D-aminoacyl-tRNAs. Also deacylates mischarged glycyl-tRNA(Ala), protecting cells against glycine mischarging by AlaRS. Acts via tRNA-based rather than protein-based catalysis; rejects L-amino acids rather than detecting D-amino acids in the active site. By recycling D-aminoacyl-tRNA to D-amino acids and free tRNA molecules, this enzyme counteracts the toxicity associated with the formation of D-aminoacyl-tRNA entities in vivo and helps enforce protein L-homochirality. In Beutenbergia cavernae (strain ATCC BAA-8 / DSM 12333 / CCUG 43141 / JCM 11478 / NBRC 16432 / NCIMB 13614 / HKI 0122), this protein is D-aminoacyl-tRNA deacylase.